Consider the following 196-residue polypeptide: HTH-type transcriptional regulator UidR (196 aa).

An HTH tetR-type domain is found at 10–70 (QPTRTRILNA…AIILQDQERA (61 aa)). The segment at residues 33–52 (SMKAICKSCAISPGTLYHHF) is a DNA-binding region (H-T-H motif).

In terms of biological role, repressor for the uidRABC (gusRABC) operon. This Escherichia coli O157:H7 protein is HTH-type transcriptional regulator UidR (uidR).